Here is an 827-residue protein sequence, read N- to C-terminus: Periplasmic nitrate reductase (827 aa).

Residues 1–33 (MNLSRRDFMKANAAMAAATAAGLTIPVKNVVAA) constitute a signal peptide (tat-type signal). Residues 37–93 (IKWDKGVCRFCGTGCAVLVGTKDGRVVASQGDPDAEVNRGLNCIKGYFLPKIMYGKD) form the 4Fe-4S Mo/W bis-MGD-type domain. [4Fe-4S] cluster is bound by residues Cys44, Cys47, Cys51, and Cys79. Mo-bis(molybdopterin guanine dinucleotide) is bound by residues Lys81, Gln148, Asn173, Cys177, 210-217 (WGSNMAEM), 241-245 (STYEH), 260-262 (QTD), Met370, Gln374, Asn480, 506-507 (SD), Lys529, Asp556, and 716-725 (TGRVLEHWHT). Phe792 contacts substrate. Positions 800 and 817 each coordinate Mo-bis(molybdopterin guanine dinucleotide).

It belongs to the prokaryotic molybdopterin-containing oxidoreductase family. NasA/NapA/NarB subfamily. Component of the periplasmic nitrate reductase NapAB complex composed of NapA and NapB. Requires [4Fe-4S] cluster as cofactor. The cofactor is Mo-bis(molybdopterin guanine dinucleotide). In terms of processing, predicted to be exported by the Tat system. The position of the signal peptide cleavage has not been experimentally proven.

Its subcellular location is the periplasm. It carries out the reaction 2 Fe(II)-[cytochrome] + nitrate + 2 H(+) = 2 Fe(III)-[cytochrome] + nitrite + H2O. Functionally, catalytic subunit of the periplasmic nitrate reductase complex NapAB. Receives electrons from NapB and catalyzes the reduction of nitrate to nitrite. This is Periplasmic nitrate reductase from Haemophilus influenzae (strain PittEE).